Here is a 265-residue protein sequence, read N- to C-terminus: Apolipoprotein A-I (265 aa).

The first 18 residues, 1 to 18, serve as a signal peptide directing secretion; the sequence is MKAVVLTLAVLFLTGSQA. 2 repeat units span residues 67 to 88 and 89 to 110. Residues 67-265 are 10 X approximate tandem repeats; the sequence is LKLVDNWDTL…IDEAAKKLTA (199 aa). A 3; half-length repeat occupies 111-121; the sequence is KDLEDVRQKTQ. 5 tandem repeats follow at residues 122 to 143, 144 to 165, 166 to 187, 188 to 209, and 210 to 231. M193 carries the post-translational modification Methionine sulfoxide. Residues 232 to 242 form a 9; half-length repeat; that stretch reads PVLEDIHQGLM. Methionine sulfoxide occurs at positions 242 and 244. Copy 10 of the repeat occupies 243–265; that stretch reads PMWESFKTGVLNVIDEAAKKLTA.

The protein belongs to the apolipoprotein A1/A4/E family. In terms of assembly, homodimer. Interacts with APOA1BP and CLU. Component of a sperm activating protein complex (SPAP), consisting of APOA1, an immunoglobulin heavy chain, an immunoglobulin light chain and albumin. Interacts with NDRG1. Interacts with SCGB3A2. Interacts with NAXE and YJEFN3. Post-translationally, glycosylated. In terms of processing, palmitoylated. Phosphorylation sites are present in the extracellular medium. Major protein of plasma HDL, also found in chylomicrons.

Its subcellular location is the secreted. Participates in the reverse transport of cholesterol from tissues to the liver for excretion by promoting cholesterol efflux from tissues and by acting as a cofactor for the lecithin cholesterol acyltransferase (LCAT). As part of the SPAP complex, activates spermatozoa motility. The protein is Apolipoprotein A-I (APOA1) of Tupaia belangeri (Common tree shrew).